A 404-amino-acid chain; its full sequence is MTETVNAARLLREQGVTAPAGFRAAGIAAGIKASGKRDLALVFNEGPDYGAAGVFTRNKVKAAPVLWSQQVLTTGALRAVILNSGGANACTGPGGFQDAHATAEAVAAALSDWGTETGAIEVAVCSTGLIGDRLPMDKLLAGVRTIVQDMAGGLSGGDDAAQAIMTTDTVPKQVALHHPGNWTVGGMAKGAGMIAPSLATMLCVLTTDAAVDPVALDTALRRATAATFDRLDIDGACSTNDTVLLLASGASGITPAQADLDDAVLRVCDDLCAQLQADAEGVTKRVNVTVTGAASDDDAVVAARTIARDSLVKTAVFGSDPNWGRVVAAVGIAPIALDPDRMTVSFNGSAVFADGVGTPGAREVDLSGPDIDITVDLRLGDGRATVRTTDLSHGYVEENSAYSS.

Substrate contacts are provided by Thr166, Lys189, Thr200, Glu280, Asn399, and Ser404. Thr200 acts as the Nucleophile in catalysis.

The protein belongs to the ArgJ family. In terms of assembly, heterotetramer of two alpha and two beta chains.

Its subcellular location is the cytoplasm. It carries out the reaction N(2)-acetyl-L-ornithine + L-glutamate = N-acetyl-L-glutamate + L-ornithine. The enzyme catalyses L-glutamate + acetyl-CoA = N-acetyl-L-glutamate + CoA + H(+). Its pathway is amino-acid biosynthesis; L-arginine biosynthesis; L-ornithine and N-acetyl-L-glutamate from L-glutamate and N(2)-acetyl-L-ornithine (cyclic): step 1/1. It functions in the pathway amino-acid biosynthesis; L-arginine biosynthesis; N(2)-acetyl-L-ornithine from L-glutamate: step 1/4. In terms of biological role, catalyzes two activities which are involved in the cyclic version of arginine biosynthesis: the synthesis of N-acetylglutamate from glutamate and acetyl-CoA as the acetyl donor, and of ornithine by transacetylation between N(2)-acetylornithine and glutamate. This Mycolicibacterium paratuberculosis (strain ATCC BAA-968 / K-10) (Mycobacterium paratuberculosis) protein is Arginine biosynthesis bifunctional protein ArgJ.